We begin with the raw amino-acid sequence, 226 residues long: 7-cyano-7-deazaguanine synthase (226 aa).

ATP is bound at residue Leu10 to Ala20. The Zn(2+) site is built by Cys191, Cys199, Cys202, and Cys205.

The protein belongs to the QueC family. It depends on Zn(2+) as a cofactor.

The enzyme catalyses 7-carboxy-7-deazaguanine + NH4(+) + ATP = 7-cyano-7-deazaguanine + ADP + phosphate + H2O + H(+). The protein operates within purine metabolism; 7-cyano-7-deazaguanine biosynthesis. Functionally, catalyzes the ATP-dependent conversion of 7-carboxy-7-deazaguanine (CDG) to 7-cyano-7-deazaguanine (preQ(0)). This is 7-cyano-7-deazaguanine synthase from Synechococcus sp. (strain CC9902).